The sequence spans 414 residues: uncharacterized protein (414 aa).

A signal peptide spans 1 to 18 (MLKRLMLASAILPVVSFA).

This is an uncharacterized protein from Aquifex aeolicus (strain VF5).